Consider the following 121-residue polypeptide: MSFYESVFIIRQDISLNDIDKIVDDFAKIIKDNNGTIIKKEYWGLRTLAYKIGSNKKGHYYFLGLDITPNVKEEIERKMKLNENIIRFLTIKADAISSEPSPMLKNQSTENNLVIDVTINN.

This sequence belongs to the bacterial ribosomal protein bS6 family.

In terms of biological role, binds together with bS18 to 16S ribosomal RNA. This is Small ribosomal subunit protein bS6 from Rickettsia canadensis (strain McKiel).